The primary structure comprises 193 residues: Interleukin-18 (193 aa).

A propeptide spanning residues 1–36 is cleaved from the precursor; it reads MAAEQVEDYCISFVEMKFINNTLYFVAENDEDLESD.

This sequence belongs to the IL-1 family. In terms of assembly, forms a ternary complex with ligand-binding receptor subunit IL18R1 and signaling receptor subunit IL18RAP at the plasma membrane. Mature IL18 first binds to IL18R1 forming a low affinity binary complex, which then interacts with IL18RAP to form a high affinity ternary complex that signals inside the cell. Interacts with cargo receptor TMED10; the interaction mediates the translocation from the cytoplasm into the ERGIC (endoplasmic reticulum-Golgi intermediate compartment) and thereby secretion. Post-translationally, the pro-IL-18 precursor is processed by CASP1, CASP4 or CASP5 to yield its mature, active form. The pro-IL-18 precursor features autoinhibitory interactions between the propeptide and the post-cleavage-site region, preventing recognition by the IL18R1 receptor. Processing by CASP1, CASP4 or CASP5 induces conformational changes to generate critical receptor-binding sites. The mature form is then secreted and released in the extracellular milieu by passing through the gasdermin-D (GSDMD) pore. In contrast, cleavage by CASP3 inactivates IL18.

It is found in the cytoplasm. Its subcellular location is the cytosol. It localises to the secreted. Pro-inflammatory cytokine primarily involved in epithelial barrier repair, polarized T-helper 1 (Th1) cell and natural killer (NK) cell immune responses. Upon binding to IL18R1 and IL18RAP, forms a signaling ternary complex which activates NF-kappa-B, triggering synthesis of inflammatory mediators. Synergizes with IL12/interleukin-12 to induce IFNG synthesis from T-helper 1 (Th1) cells and natural killer (NK) cells. Involved in transduction of inflammation downstream of pyroptosis: its mature form is specifically released in the extracellular milieu by passing through the gasdermin-D (GSDMD) pore. This is Interleukin-18 (IL18) from Bos taurus (Bovine).